Here is a 115-residue protein sequence, read N- to C-terminus: MAAIPSSGSLVATHDYYRRRLGSSSSSSSGGSAEYPGDAVLQSPGLPKADPGHWWASFFFGKSTLPFMTTVLESPERSAESPQVSRSPMTCGLTPETMKQQPVIHSGQTNPRDLS.

Position 9 is a phosphoserine (serine 9). Disordered stretches follow at residues 21–46 (LGSS…SPGL) and 73–115 (ESPE…RDLS). Low complexity predominate over residues 22–32 (GSSSSSSSGGS). Over residues 106–115 (SGQTNPRDLS) the composition is skewed to polar residues.

This sequence belongs to the PPDPF family.

Probable regulator of exocrine pancreas development. The protein is Pancreatic progenitor cell differentiation and proliferation factor (Ppdpf) of Mus musculus (Mouse).